The following is a 476-amino-acid chain: Glycogen synthase (476 aa).

An ADP-alpha-D-glucose-binding site is contributed by lysine 15.

Belongs to the glycosyltransferase 1 family. Bacterial/plant glycogen synthase subfamily.

It carries out the reaction [(1-&gt;4)-alpha-D-glucosyl](n) + ADP-alpha-D-glucose = [(1-&gt;4)-alpha-D-glucosyl](n+1) + ADP + H(+). It participates in glycan biosynthesis; glycogen biosynthesis. Its function is as follows. Synthesizes alpha-1,4-glucan chains using ADP-glucose. This chain is Glycogen synthase (glgA), found in Haemophilus influenzae (strain ATCC 51907 / DSM 11121 / KW20 / Rd).